Reading from the N-terminus, the 495-residue chain is Inner membrane ALBINO3-like protein 1, chloroplastic (495 aa).

The chain crosses the membrane as a helical span at residues 76 to 96 (LGAIYVLADASASTAAAAVMP). Topologically, residues 97 to 206 (TAVDSAAGAA…VLYEQAGVNP (110 aa)) are stromal. A helical membrane pass occupies residues 207–227 (LAGCLPTLATIPIFIGLFSSL). The Lumenal segment spans residues 228 to 273 (TNVANDGLLDTQGFYFVPSLAGPTTMAMRQSGLGTSWLWPLGPDGA). The helical transmembrane segment at 274-294 (PPIGWEDAAAYLTLPLLLVAV) threads the bilayer. The Stromal segment spans residues 295–317 (QYASSSVTSPPIDPKDENANTQR). The chain crosses the membrane as a helical span at residues 318–338 (ALLVFLPLMVGWFSLNVPAGL). The Lumenal segment spans residues 339 to 441 (SLYYLANTVL…ASVSLSVDDS (103 aa)). Residues 442–462 (TAAIAGTATMAVTAGAPAAAM) traverse the membrane as a helical segment. Residues 463–495 (DPSKVNRRCKRRRLTSLVQDGSTASAAVAGASA) are Stromal-facing.

It belongs to the OXA1/ALB3/YidC (TC 2.A.9.2) family. In terms of assembly, associates with the LHCII complex and with the psaE subunit of the LHCI complex.

It localises to the plastid. The protein resides in the chloroplast thylakoid membrane. Required for the insertion of some light-harvesting complexes (LHC) proteins into the chloroplast thylakoid membrane. Essential for the assembly and activity of LHC I and II. Its function is probably partly distinct from that of ALB3.2. This chain is Inner membrane ALBINO3-like protein 1, chloroplastic (ALB3.1), found in Chlamydomonas reinhardtii (Chlamydomonas smithii).